The following is a 453-amino-acid chain: D-aminoacyl-tRNA deacylase (453 aa).

Residues 428-453 are disordered; sequence VRADVALHERPRERVRRPSDDEGKGN.

The protein belongs to the DtdA deacylase family. As to quaternary structure, monomer. It depends on Zn(2+) as a cofactor.

It carries out the reaction a D-aminoacyl-tRNA + H2O = a tRNA + a D-alpha-amino acid + H(+). It catalyses the reaction glycyl-tRNA(Ala) + H2O = tRNA(Ala) + glycine + H(+). D-aminoacyl-tRNA deacylase with broad substrate specificity. By recycling D-aminoacyl-tRNA to D-amino acids and free tRNA molecules, this enzyme counteracts the toxicity associated with the formation of D-aminoacyl-tRNA entities in vivo. In Halobacterium salinarum (strain ATCC 29341 / DSM 671 / R1), this protein is D-aminoacyl-tRNA deacylase.